A 311-amino-acid chain; its full sequence is Thioredoxin reductase (311 aa).

Residues 15-18 (SGPA), 37-44 (EGTQFGGA), N53, and V86 each bind FAD. C137 and C140 are joined by a disulfide. The NADP(+) site is built by S158, H177, R183, I240, and Y260. FAD is bound by residues D280 and 287 to 290 (RQAI). Position 287 (R287) interacts with NADP(+).

Belongs to the class-II pyridine nucleotide-disulfide oxidoreductase family. Homodimer. FAD is required as a cofactor.

The protein resides in the cytoplasm. The enzyme catalyses [thioredoxin]-dithiol + NADP(+) = [thioredoxin]-disulfide + NADPH + H(+). The sequence is that of Thioredoxin reductase from Mycolicibacterium smegmatis (Mycobacterium smegmatis).